We begin with the raw amino-acid sequence, 349 residues long: Flagellar P-ring protein (349 aa).

A signal peptide spans 1-20 (MSKAIKILLPLLLFSLSLQA).

It belongs to the FlgI family. As to quaternary structure, the basal body constitutes a major portion of the flagellar organelle and consists of four rings (L,P,S, and M) mounted on a central rod.

The protein localises to the periplasm. It is found in the bacterial flagellum basal body. Assembles around the rod to form the L-ring and probably protects the motor/basal body from shearing forces during rotation. This Wolinella succinogenes (strain ATCC 29543 / DSM 1740 / CCUG 13145 / JCM 31913 / LMG 7466 / NCTC 11488 / FDC 602W) (Vibrio succinogenes) protein is Flagellar P-ring protein.